The sequence spans 281 residues: uncharacterized protein (281 aa).

Residues 242-281 (IDKQSRKKNIIREINDIKSKINDLSNYMDNLISELDDLFD) adopt a coiled-coil conformation.

This is an uncharacterized protein from Acanthamoeba polyphaga (Amoeba).